The sequence spans 134 residues: ATP synthase epsilon chain (134 aa).

It belongs to the ATPase epsilon chain family. As to quaternary structure, F-type ATPases have 2 components, CF(1) - the catalytic core - and CF(0) - the membrane proton channel. CF(1) has five subunits: alpha(3), beta(3), gamma(1), delta(1), epsilon(1). CF(0) has three main subunits: a, b and c.

Its subcellular location is the cellular thylakoid membrane. Its function is as follows. Produces ATP from ADP in the presence of a proton gradient across the membrane. This is ATP synthase epsilon chain from Prochlorococcus marinus (strain MIT 9301).